Here is a 276-residue protein sequence, read N- to C-terminus: CTD small phosphatase-like protein (276 aa).

Residues 1–31 form a disordered region; sequence MDGPAIITQVTNPKEDEARSPVAGEKASQRN. The region spanning 102 to 260 is the FCP1 homology domain; the sequence is LDYGKKCVVI…LDLIPFFEGL (159 aa). Asp112 functions as the 4-aspartylphosphate intermediate in the catalytic mechanism. Residues Asp112, Asp114, and Asn223 each contribute to the Mg(2+) site. The Proton donor role is filled by Asp114.

As to quaternary structure, monomer. Interacts with REST. The cofactor is Mg(2+).

The protein resides in the nucleus. The catalysed reaction is O-phospho-L-seryl-[protein] + H2O = L-seryl-[protein] + phosphate. The enzyme catalyses O-phospho-L-threonyl-[protein] + H2O = L-threonyl-[protein] + phosphate. Functionally, preferentially catalyzes the dephosphorylation of 'Ser-5' within the tandem 7 residue repeats in the C-terminal domain (CTD) of the largest RNA polymerase II subunit POLR2A. Negatively regulates RNA polymerase II transcription, possibly by controlling the transition from initiation/capping to processive transcript elongation. Recruited by REST to neuronal genes that contain RE-1 elements, leading to neuronal gene silencing in non-neuronal cells. The polypeptide is CTD small phosphatase-like protein (Ctdspl) (Mus musculus (Mouse)).